A 190-amino-acid polypeptide reads, in one-letter code: Probable nicotinate-nucleotide adenylyltransferase (190 aa).

It belongs to the NadD family.

The enzyme catalyses nicotinate beta-D-ribonucleotide + ATP + H(+) = deamido-NAD(+) + diphosphate. It participates in cofactor biosynthesis; NAD(+) biosynthesis; deamido-NAD(+) from nicotinate D-ribonucleotide: step 1/1. Catalyzes the reversible adenylation of nicotinate mononucleotide (NaMN) to nicotinic acid adenine dinucleotide (NaAD). The protein is Probable nicotinate-nucleotide adenylyltransferase of Frankia alni (strain DSM 45986 / CECT 9034 / ACN14a).